The primary structure comprises 242 residues: Uridylate kinase (242 aa).

Position 16–19 (16–19) interacts with ATP; it reads KVSG. Residue glycine 58 coordinates UMP. Positions 59 and 63 each coordinate ATP. UMP is bound by residues aspartate 78 and 139-146; that span reads TGNPFCTT. Residues threonine 166, glutamine 167, tyrosine 172, and aspartate 175 each coordinate ATP.

This sequence belongs to the UMP kinase family. Homohexamer.

It is found in the cytoplasm. It catalyses the reaction UMP + ATP = UDP + ADP. Its pathway is pyrimidine metabolism; CTP biosynthesis via de novo pathway; UDP from UMP (UMPK route): step 1/1. Its activity is regulated as follows. Inhibited by UTP. Catalyzes the reversible phosphorylation of UMP to UDP. This Rickettsia conorii (strain ATCC VR-613 / Malish 7) protein is Uridylate kinase.